The sequence spans 185 residues: ATP synthase subunit delta (185 aa).

It belongs to the ATPase delta chain family. F-type ATPases have 2 components, F(1) - the catalytic core - and F(0) - the membrane proton channel. F(1) has five subunits: alpha(3), beta(3), gamma(1), delta(1), epsilon(1). F(0) has three main subunits: a(1), b(2) and c(10-14). The alpha and beta chains form an alternating ring which encloses part of the gamma chain. F(1) is attached to F(0) by a central stalk formed by the gamma and epsilon chains, while a peripheral stalk is formed by the delta and b chains.

It localises to the cell inner membrane. F(1)F(0) ATP synthase produces ATP from ADP in the presence of a proton or sodium gradient. F-type ATPases consist of two structural domains, F(1) containing the extramembraneous catalytic core and F(0) containing the membrane proton channel, linked together by a central stalk and a peripheral stalk. During catalysis, ATP synthesis in the catalytic domain of F(1) is coupled via a rotary mechanism of the central stalk subunits to proton translocation. Functionally, this protein is part of the stalk that links CF(0) to CF(1). It either transmits conformational changes from CF(0) to CF(1) or is implicated in proton conduction. In Coxiella burnetii (strain CbuK_Q154) (Coxiella burnetii (strain Q154)), this protein is ATP synthase subunit delta.